A 394-amino-acid chain; its full sequence is Salivary plasminogen activator gamma (394 aa).

The signal sequence occupies residues 1–36 (MVNTMKTKLLCVLLLCGAVFSLPRQETYRQLARGSR). Residues 45–126 (CYKDQGVTYR…TSESCSVPVC (82 aa)) enclose the Kringle domain. 9 disulfides stabilise this stretch: cysteine 45–cysteine 126, cysteine 66–cysteine 108, cysteine 97–cysteine 121, cysteine 131–cysteine 262, cysteine 174–cysteine 190, cysteine 182–cysteine 251, cysteine 276–cysteine 351, cysteine 308–cysteine 324, and cysteine 341–cysteine 369. The Peptidase S1 domain occupies 143 to 393 (STGGLFTDIT…YLGWIRDNMR (251 aa)). Active-site charge relay system residues include histidine 189 and aspartate 238. Residue asparagine 315 is glycosylated (N-linked (GlcNAc...) asparagine). The active-site Charge relay system is the serine 345.

This sequence belongs to the peptidase S1 family. In terms of assembly, monomer.

It is found in the secreted. The catalysed reaction is Specific cleavage of Arg-|-Val bond in plasminogen to form plasmin.. Its function is as follows. Probably essential to support the feeding habits of this exclusively haematophagous animal. Probable potent thrombolytic agent. The protein is Salivary plasminogen activator gamma of Desmodus rotundus (Vampire bat).